The sequence spans 345 residues: Tubulin-folding cofactor C (345 aa).

Methionine 1 bears the N-acetylmethionine mark. Residues 1–10 (MEDDGQSSVA) are compositionally biased toward polar residues. Positions 1 to 83 (MEDDGQSSVA…SRLASSSTDS (83 aa)) are disordered. Positions 23 to 39 (DMLERLSARHQARKSDS) are enriched in basic and acidic residues. Residues 40 to 55 (PDSSSSSSSTLESTSS) are compositionally biased toward low complexity. Basic and acidic residues predominate over residues 61 to 73 (SDSKRSIESRIAE). Low complexity predominate over residues 74 to 83 (SRLASSSTDS). The C-CAP/cofactor C-like domain occupies 169–318 (PPKLVPVRDS…NWANVDDFRW (150 aa)).

The protein belongs to the TBCC family. As to quaternary structure, supercomplex made of cofactors A to E. Cofactors A and D function by capturing and stabilizing tubulin in a quasi-native conformation. Cofactor E binds to the cofactor D-tubulin complex; interaction with cofactor C then causes the release of tubulin polypeptides that are committed to the native state. In terms of tissue distribution, ubiquitously expressed (at protein level). Present in leaves, roots, flowers, and stems.

The protein localises to the cytoplasm. Essential tubulin-folding protein involved in the final step of the tubulin folding pathway. Required for continuous microtubule cytoskeleton organization, mitotic division, cytokinesis, and to couple cell cycle progression to cell division in embryos and endosperms. Not essential for cell viability. Binds probably to the multimeric supercomplex, stimulating GTP hydrolysis by the bound beta-tubulin and the release of the alpha-/beta-tubulin heterodimer. The chain is Tubulin-folding cofactor C (TFCC) from Arabidopsis thaliana (Mouse-ear cress).